The sequence spans 379 residues: Tetraacyldisaccharide 4'-kinase (379 aa).

A63–T70 contacts ATP.

It belongs to the LpxK family.

The catalysed reaction is a lipid A disaccharide + ATP = a lipid IVA + ADP + H(+). Its pathway is glycolipid biosynthesis; lipid IV(A) biosynthesis; lipid IV(A) from (3R)-3-hydroxytetradecanoyl-[acyl-carrier-protein] and UDP-N-acetyl-alpha-D-glucosamine: step 6/6. Transfers the gamma-phosphate of ATP to the 4'-position of a tetraacyldisaccharide 1-phosphate intermediate (termed DS-1-P) to form tetraacyldisaccharide 1,4'-bis-phosphate (lipid IVA). The protein is Tetraacyldisaccharide 4'-kinase of Anaeromyxobacter dehalogenans (strain 2CP-1 / ATCC BAA-258).